Consider the following 340-residue polypeptide: UDP-3-O-(3-hydroxymyristoyl)glucosamine N-acyltransferase (340 aa).

His-239 acts as the Proton acceptor in catalysis.

The protein belongs to the transferase hexapeptide repeat family. LpxD subfamily. In terms of assembly, homotrimer.

It carries out the reaction a UDP-3-O-[(3R)-3-hydroxyacyl]-alpha-D-glucosamine + a (3R)-hydroxyacyl-[ACP] = a UDP-2-N,3-O-bis[(3R)-3-hydroxyacyl]-alpha-D-glucosamine + holo-[ACP] + H(+). The enzyme catalyses UDP-3-O-[(3R)-3-hydroxytetradecanoyl]-alpha-D-glucosamine + (3R)-hydroxytetradecanoyl-[ACP] = UDP-2-N,3-O-bis[(3R)-3-hydroxytetradecanoyl]-alpha-D-glucosamine + holo-[ACP] + H(+). The protein operates within glycolipid biosynthesis; lipid IV(A) biosynthesis; lipid IV(A) from (3R)-3-hydroxytetradecanoyl-[acyl-carrier-protein] and UDP-N-acetyl-alpha-D-glucosamine: step 3/6. Its function is as follows. Catalyzes the N-acylation of UDP-3-O-(hydroxytetradecanoyl)glucosamine using 3-hydroxytetradecanoyl-ACP as the acyl donor. Is involved in the biosynthesis of lipid A, a phosphorylated glycolipid that anchors the lipopolysaccharide to the outer membrane of the cell. The polypeptide is UDP-3-O-(3-hydroxymyristoyl)glucosamine N-acyltransferase (Pectobacterium atrosepticum (strain SCRI 1043 / ATCC BAA-672) (Erwinia carotovora subsp. atroseptica)).